A 518-amino-acid polypeptide reads, in one-letter code: Putative BTB/POZ domain and WD-repeat protein R731 (518 aa).

A BTB domain is found at threonine 22–asparagine 92. The segment at asparagine 224–aspartate 246 is disordered. Acidic residues predominate over residues serine 228–aspartate 246. WD repeat units follow at residues asparagine 391–lysine 430 and phenylalanine 437–asparagine 475.

This sequence belongs to the mimivirus BTB/WD family.

The chain is Putative BTB/POZ domain and WD-repeat protein R731 from Acanthamoeba polyphaga (Amoeba).